Here is a 373-residue protein sequence, read N- to C-terminus: PqqA peptide cyclase (373 aa).

The region spanning 9 to 224 (LTKPRWLLAE…QSYKEKVKGR (216 aa)) is the Radical SAM core domain. [4Fe-4S] cluster-binding residues include cysteine 23, cysteine 27, and cysteine 30.

This sequence belongs to the radical SAM superfamily. PqqE family. Interacts with PqqD. The interaction is necessary for activity of PqqE. The cofactor is [4Fe-4S] cluster.

It carries out the reaction [PQQ precursor protein] + S-adenosyl-L-methionine = E-Y cross-linked-[PQQ precursor protein] + 5'-deoxyadenosine + L-methionine + H(+). Its pathway is cofactor biosynthesis; pyrroloquinoline quinone biosynthesis. Catalyzes the cross-linking of a glutamate residue and a tyrosine residue in the PqqA protein as part of the biosynthesis of pyrroloquinoline quinone (PQQ). The polypeptide is PqqA peptide cyclase (Methylococcus capsulatus (strain ATCC 33009 / NCIMB 11132 / Bath)).